The chain runs to 1163 residues: Type IV pilus biogenesis factor PilY1 (1163 aa).

Residues 1 to 30 (MKSALHQIGKTSLAAALSGAVLLSAQTTHA) form the signal peptide. The segment at 329 to 352 (SVGNADSTSRSLPDGKSYSSQTPY) is disordered. Positions 600, 602, 604, and 608 each coordinate Ca(2+). An integrin-binding motif RGD region spans residues 619–621 (RGD). Ca(2+) contacts are provided by D851, N853, D855, V857, and D859. The tract at residues 1138–1163 (SGECLTVNPGPNTRGRQNWRPIEGKN) is disordered.

Belongs to the PilY1 family. In terms of assembly, interacts (via C-terminal 532-1163) with host integrins alpha-V/beta-3 (ITGAV/ITGB3) and alpha-V/beta-5 (ITGAV/ITGB5).

It localises to the fimbrium. It is found in the membrane. Its subcellular location is the cytoplasm. The protein localises to the cytosol. Functionally, involved in pilus assembly, twitching motility and adhesion to host cells. Primes type IV pili (T4P) assembly and is required for inclusion of minor pilins PilV, PilW and PilX to the surface pili. Stabilizes assembled pilus fibers likely by antagonizing retraction mediated by PilT. Calcium-binding and calcium release by PilY1 seem to be essential for twitching motility and for regulation of pilus retraction dynamics of PilT. Adhesin for human tissue specifically recognizing a host receptor localized or enriched on basolateral epithelial cell surfaces. Binds host integrins in an calcium-dependent manner in vitro and this interaction may be employed by the bacterium to mediate host epithelial cell binding in vivo. In Pseudomonas aeruginosa (strain PAK), this protein is Type IV pilus biogenesis factor PilY1.